The following is a 445-amino-acid chain: Phosphoglucosamine mutase (445 aa).

The active-site Phosphoserine intermediate is the Ser102. The Mg(2+) site is built by Ser102, Asp241, Asp243, and Asp245. Ser102 carries the post-translational modification Phosphoserine.

The protein belongs to the phosphohexose mutase family. Mg(2+) serves as cofactor. Activated by phosphorylation.

It catalyses the reaction alpha-D-glucosamine 1-phosphate = D-glucosamine 6-phosphate. Functionally, catalyzes the conversion of glucosamine-6-phosphate to glucosamine-1-phosphate. The polypeptide is Phosphoglucosamine mutase (Shewanella baltica (strain OS155 / ATCC BAA-1091)).